The following is a 901-amino-acid chain: HTH-type transcriptional regulator MalT (901 aa).

39-46 (SPAGYGKT) contacts ATP. The HTH luxR-type domain occupies 829–894 (ELIHTSPLTQ…AAVQHAQKLL (66 aa)). A DNA-binding region (H-T-H motif) is located at residues 853–872 (NEQIAGELEVAATTIKTHIR).

Belongs to the MalT family. As to quaternary structure, monomer in solution. Oligomerizes to an active state in the presence of the positive effectors ATP and maltotriose.

Activated by ATP and maltotriose, which are both required for DNA binding. Functionally, positively regulates the transcription of the maltose regulon whose gene products are responsible for uptake and catabolism of malto-oligosaccharides. Specifically binds to the promoter region of its target genes, recognizing a short DNA motif called the MalT box. This is HTH-type transcriptional regulator MalT from Shigella sonnei (strain Ss046).